A 917-amino-acid chain; its full sequence is Major intrinsically disordered Notch2-binding receptor 1 (917 aa).

At 1–892 (MEANQEASLF…AEFRRAKVCK (892 aa)) the chain is on the cytoplasmic side. 7 disordered regions span residues 337–367 (STYF…WPAK), 389–410 (SEEK…GPDR), 457–476 (DKSI…SVGT), 568–588 (ITNG…NVHH), 652–679 (SEAP…LENS), 706–727 (TRPS…IASI), and 746–783 (NEEE…LPKQ). A compositionally biased stretch (polar residues) spans 460-476 (ISCTSGQHSSDTSSVGT). The span at 576–588 (KGDKCNRPENVHH) shows a compositional bias: basic and acidic residues. S712 bears the Phosphoserine mark. A helical transmembrane segment spans residues 893–913 (IAALITAAACTVILVIVVPIC). Over 914–917 (TMKS) the chain is Extracellular.

Belongs to the MINAR family. Interacts with NOTCH2; this interaction increases MINAR1 stability. Interacts (via N-terminus) with DEPTOR (via PDZ domain); this interaction may stabilize DEPTOR protein by impairing its ubiquitination.

It is found in the cell membrane. In terms of biological role, intrinsically disordered protein which may negatively regulate mTOR signaling pathway by stabilizing the mTOR complex component DEPTOR. Negatively regulates angiogenesis. Negatively regulates cell growth. Negatively regulates neurite outgrowth in hippocampal neurons. This chain is Major intrinsically disordered Notch2-binding receptor 1 (Minar1), found in Rattus norvegicus (Rat).